A 298-amino-acid chain; its full sequence is ATP synthase F(1) complex subunit gamma, mitochondrial (298 aa).

The transit peptide at 1-25 directs the protein to the mitochondrion; it reads MFSRASVVGLSACAVQPQWIQVRNM. The residue at position 39 (Lys-39) is an N6-acetyllysine. Lys-49 carries the N6-succinyllysine modification. Residue Lys-55 is modified to N6-acetyllysine. At Lys-115 the chain carries N6-acetyllysine; alternate. Lys-115 is subject to N6-succinyllysine; alternate. Lys-138 bears the N6-acetyllysine mark. At Ser-146 the chain carries Phosphoserine. Lys-154 is subject to N6-acetyllysine; alternate. Lys-154 is subject to N6-succinyllysine; alternate. Lys-197 bears the N6-acetyllysine mark. Position 270 is an N6-succinyllysine (Lys-270).

It belongs to the ATPase gamma chain family. Component of the ATP synthase complex composed at least of ATP5F1A/subunit alpha, ATP5F1B/subunit beta, ATP5MC1/subunit c (homooctomer), MT-ATP6/subunit a, MT-ATP8/subunit 8, ATP5ME/subunit e, ATP5MF/subunit f, ATP5MG/subunit g, ATP5MK/subunit k, ATP5MJ/subunit j, ATP5F1C/subunit gamma, ATP5F1D/subunit delta, ATP5F1E/subunit epsilon, ATP5PF/subunit F6, ATP5PB/subunit b, ATP5PD/subunit d, ATP5PO/subunit OSCP. ATP synthase complex consists of a soluble F(1) head domain (subunits alpha(3) and beta(3)) - the catalytic core - and a membrane F(0) domain - the membrane proton channel (subunits c, a, 8, e, f, g, k and j). These two domains are linked by a central stalk (subunits gamma, delta, and epsilon) rotating inside the F1 region and a stationary peripheral stalk (subunits F6, b, d, and OSCP). Interacts with FLVCR2; this interaction occurs in the absence of heme and is disrupted upon heme binding.

It localises to the mitochondrion inner membrane. Functionally, subunit gamma, of the mitochondrial membrane ATP synthase complex (F(1)F(0) ATP synthase or Complex V) that produces ATP from ADP in the presence of a proton gradient across the membrane which is generated by electron transport complexes of the respiratory chain. ATP synthase complex consist of a soluble F(1) head domain - the catalytic core - and a membrane F(1) domain - the membrane proton channel. These two domains are linked by a central stalk rotating inside the F(1) region and a stationary peripheral stalk. During catalysis, ATP synthesis in the catalytic domain of F(1) is coupled via a rotary mechanism of the central stalk subunits to proton translocation. In vivo, can only synthesize ATP although its ATP hydrolase activity can be activated artificially in vitro. With the central stalk subunit delta, is essential for the biogenesis of F(1) catalytic part of the ATP synthase complex namely in the formation of F1 assembly intermediate. This is ATP synthase F(1) complex subunit gamma, mitochondrial from Mus musculus (Mouse).